Reading from the N-terminus, the 555-residue chain is Glucose-6-phosphate isomerase (555 aa).

Glu-353 (proton donor) is an active-site residue. Active-site residues include His-384 and Lys-516.

This sequence belongs to the GPI family.

The protein resides in the cytoplasm. It carries out the reaction alpha-D-glucose 6-phosphate = beta-D-fructose 6-phosphate. It functions in the pathway carbohydrate biosynthesis; gluconeogenesis. The protein operates within carbohydrate degradation; glycolysis; D-glyceraldehyde 3-phosphate and glycerone phosphate from D-glucose: step 2/4. Functionally, catalyzes the reversible isomerization of glucose-6-phosphate to fructose-6-phosphate. The chain is Glucose-6-phosphate isomerase from Methylobacillus flagellatus (strain ATCC 51484 / DSM 6875 / VKM B-1610 / KT).